The following is a 440-amino-acid chain: Enolase (440 aa).

Gln163 is a (2R)-2-phosphoglycerate binding site. Glu205 functions as the Proton donor in the catalytic mechanism. Mg(2+)-binding residues include Asp242, Glu288, and Asp315. Lys340, Arg369, Ser370, and Lys391 together coordinate (2R)-2-phosphoglycerate. The Proton acceptor role is filled by Lys340.

This sequence belongs to the enolase family. Requires Mg(2+) as cofactor.

The protein localises to the cytoplasm. The protein resides in the secreted. Its subcellular location is the cell surface. It carries out the reaction (2R)-2-phosphoglycerate = phosphoenolpyruvate + H2O. Its pathway is carbohydrate degradation; glycolysis; pyruvate from D-glyceraldehyde 3-phosphate: step 4/5. Its function is as follows. Catalyzes the reversible conversion of 2-phosphoglycerate (2-PG) into phosphoenolpyruvate (PEP). It is essential for the degradation of carbohydrates via glycolysis. The chain is Enolase from Pediococcus pentosaceus (strain ATCC 25745 / CCUG 21536 / LMG 10740 / 183-1w).